Consider the following 137-residue polypeptide: Small ribosomal subunit protein uS9 (137 aa).

Residues 100–137 (ENRPPLKSEGYLTRDPRAKERKKYGLHKARKAPQYSKR) are disordered. Residues 118 to 137 (KERKKYGLHKARKAPQYSKR) are compositionally biased toward basic residues.

It belongs to the universal ribosomal protein uS9 family.

This Microcystis aeruginosa (strain NIES-843 / IAM M-2473) protein is Small ribosomal subunit protein uS9.